We begin with the raw amino-acid sequence, 508 residues long: MIITALIAIAVGFLIGYLARKIIAESKIKSAENLARTILESAKRDAENKKRELLLEAKEEIHRMRTDLEKEIRDRRGELQRLEKRLLQKEETLDKRAETLEQKESFLEEKQKEIQQLEEQISLLYQKEIEELERISGLSREEAKAILLENVQKDIQHEMAVMIKEMENKAKEEAEMKAREIIGNAIQRCAADHAAETTVSVVTLPNDEMKGRIIGREGRNIRTIETLTGIDLIIDDTPEAVVISGFDPIRREVARIALEKLIEDGRIHPARIEEMVEKAKKEVDNMILKAGEEAAFEVGIHGLHPELIKLLGRLKFRTSYGQNVLKHSIEVAHLAGLMAYELGADALVAKRAGLLHDIGKAVDHEVEGPHVMIGAELAKRYHESDAVIHAIMAHHNDVEPQTVEAVLVQAADAISAARPGARREALEAYIKRLDKLEQIANSFEGVEKSYAIQAGREIRIMVKPEIVDDDDIVILARNISKKIEEEVEYPGQIKVTVIRETVAVDYAK.

Residues 2–22 (IITALIAIAVGFLIGYLARKI) form a helical membrane-spanning segment. In terms of domain architecture, KH spans 198 to 261 (TVSVVTLPND…EVARIALEKL (64 aa)). The 94-residue stretch at 324 to 417 (VLKHSIEVAH…VQAADAISAA (94 aa)) folds into the HD domain.

It belongs to the RNase Y family.

The protein resides in the cell membrane. Its function is as follows. Endoribonuclease that initiates mRNA decay. This chain is Ribonuclease Y, found in Thermoanaerobacter pseudethanolicus (strain ATCC 33223 / 39E) (Clostridium thermohydrosulfuricum).